Consider the following 416-residue polypeptide: Lipase A (416 aa).

The first 32 residues, 1–32, serve as a signal peptide directing secretion; the sequence is MRLAPQKPLLLSTVLHLLLSIWMLGFASLAGA. 2 disulfide bridges follow: Cys67-Cys391 and Cys177-Cys180. N-linked (GlcNAc...) asparagine glycosylation occurs at Asn179. Ser219 acts as the Nucleophile in catalysis. Active-site charge relay system residues include Asp287 and His381.

The protein belongs to the AB hydrolase superfamily. Lipase family. Post-translationally, glycosylated.

It localises to the secreted. The enzyme catalyses Deacetylation of xylans and xylo-oligosaccharides.. The catalysed reaction is a triacylglycerol + H2O = a diacylglycerol + a fatty acid + H(+). Its function is as follows. Lipolytic enzyme that possesses both lipase and acetylxylan esterase activity. Active towards p-nitrophenol esters of various carbon chain length with preference for medium-chain fatty acids (C-8). Also highly active on the acetylated compounds xylose tetra-acetate and oat spelt xylan. In Sodiomyces alcalophilus (Acremonium alcalophilum), this protein is Lipase A.